Here is a 340-residue protein sequence, read N- to C-terminus: Inactive hyaluronidase B (340 aa).

Cystine bridges form between C21/C310 and C187/C199. N-linked (GlcNAc...) asparagine glycans are attached at residues N66 and N81.

It belongs to the glycosyl hydrolase 56 family. Post-translationally, N-glycosylated on at least two Asn residues by identical heptasaccharide units composed of Man, GlcNAc, and Fuc residues in the molar ration of 3:2:2. In terms of tissue distribution, expressed by the venom gland.

It is found in the secreted. Has no hyaluronidase activity. This chain is Inactive hyaluronidase B, found in Vespula vulgaris (Yellow jacket).